The following is a 502-amino-acid chain: ATP synthase subunit beta, chloroplastic (502 aa).

Ser17 carries the post-translational modification Phosphoserine. Gly176–Thr183 is a binding site for ATP.

It belongs to the ATPase alpha/beta chains family. In terms of assembly, F-type ATPases have 2 components, CF(1) - the catalytic core - and CF(0) - the membrane proton channel. CF(1) has five subunits: alpha(3), beta(3), gamma(1), delta(1), epsilon(1). CF(0) has four main subunits: a(1), b(1), b'(1) and c(9-12).

It is found in the plastid. The protein resides in the chloroplast thylakoid membrane. It carries out the reaction ATP + H2O + 4 H(+)(in) = ADP + phosphate + 5 H(+)(out). In terms of biological role, produces ATP from ADP in the presence of a proton gradient across the membrane. The catalytic sites are hosted primarily by the beta subunits. The chain is ATP synthase subunit beta, chloroplastic from Lepidium virginicum (Virginia pepperweed).